Consider the following 178-residue polypeptide: Prion-like protein doppel (178 aa).

The signal sequence occupies residues 1-25 (MRKHLGGCWLAIVCVLLFSQLSSVK). The segment at 27–50 (RGIKHRIKWNRKVLPSTSQVTEAH) is flexible tail. Residues 51-154 (TAEIRPGAFI…KHCDFWLERG (104 aa)) are globular. 2 disulfides stabilise this stretch: cysteine 94–cysteine 147 and cysteine 108–cysteine 142. Residues asparagine 98 and asparagine 110 are each glycosylated (N-linked (GlcNAc...) asparagine). Residues 124-141 (KQDNKLYQRVLWQLIREL) are cu(2+) binding. Glycine 154 carries GPI-anchor amidated glycine lipidation. A propeptide spans 155–178 (AGLQVTLDQPMMLCLLVFIWFIVK) (removed in mature form).

Belongs to the prion family. N-glycosylated. Post-translationally, O-glycosylated. In terms of tissue distribution, strongly expressed in testis. Detected at low levels in lymph node, spleen and ovary.

The protein resides in the cell membrane. Its function is as follows. Required for normal acrosome reaction and for normal male fertility. Can bind Cu(2+). This chain is Prion-like protein doppel (PRND), found in Ovis aries (Sheep).